The sequence spans 941 residues: Translation initiation factor IF-2 (941 aa).

The segment covering 170–209 (DAQKAEVDAQKAEAEKPVEVKADESAIEEKKRVAAEESKK) has biased composition (basic and acidic residues). Disordered stretches follow at residues 170–228 (DAQK…KAAA) and 252–351 (RAIK…SNFQ). The segment covering 256-269 (APEPVAPVAKPAAE) has biased composition (low complexity). Over residues 271–297 (TLHKPADKKPGEKKDEKKPAVTADKKS) the composition is skewed to basic and acidic residues. The segment covering 299–308 (KSANVSSTWQ) has biased composition (polar residues). The tr-type G domain occupies 441-610 (PRAPVVTVMG…LLQAEVLELK (170 aa)). Positions 450-457 (GHVDHGKT) are G1. Residue 450–457 (GHVDHGKT) coordinates GTP. Residues 475 to 479 (GITQH) form a G2 region. Positions 496-499 (DTPG) are G3. Residues 496 to 500 (DTPGH) and 550 to 553 (NKID) each bind GTP. The segment at 550-553 (NKID) is G4. A G5 region spans residues 586-588 (SAK).

It belongs to the TRAFAC class translation factor GTPase superfamily. Classic translation factor GTPase family. IF-2 subfamily.

It localises to the cytoplasm. In terms of biological role, one of the essential components for the initiation of protein synthesis. Protects formylmethionyl-tRNA from spontaneous hydrolysis and promotes its binding to the 30S ribosomal subunits. Also involved in the hydrolysis of GTP during the formation of the 70S ribosomal complex. The polypeptide is Translation initiation factor IF-2 (Herminiimonas arsenicoxydans).